The sequence spans 147 residues: Hemoglobin subunit beta (147 aa).

Residues 3-147 (HWTPEEKQYI…VAHALALGYH (145 aa)) enclose the Globin domain. Heme b is bound by residues His-64 and His-93.

Belongs to the globin family. In terms of assembly, heterotetramer of two alpha-D chains and two beta chains. Red blood cells.

Involved in oxygen transport from the lung to the various peripheral tissues. The chain is Hemoglobin subunit beta (HBB) from Chelonoidis niger (Galapagos giant tortoise).